The primary structure comprises 393 residues: NAD(P)H-quinone oxidoreductase subunit H, chloroplastic (393 aa).

The protein belongs to the complex I 49 kDa subunit family. As to quaternary structure, NDH is composed of at least 16 different subunits, 5 of which are encoded in the nucleus.

It localises to the plastid. The protein localises to the chloroplast thylakoid membrane. It carries out the reaction a plastoquinone + NADH + (n+1) H(+)(in) = a plastoquinol + NAD(+) + n H(+)(out). The catalysed reaction is a plastoquinone + NADPH + (n+1) H(+)(in) = a plastoquinol + NADP(+) + n H(+)(out). Functionally, NDH shuttles electrons from NAD(P)H:plastoquinone, via FMN and iron-sulfur (Fe-S) centers, to quinones in the photosynthetic chain and possibly in a chloroplast respiratory chain. The immediate electron acceptor for the enzyme in this species is believed to be plastoquinone. Couples the redox reaction to proton translocation, and thus conserves the redox energy in a proton gradient. The chain is NAD(P)H-quinone oxidoreductase subunit H, chloroplastic from Zea mays (Maize).